The primary structure comprises 685 residues: ATP-dependent zinc metalloprotease FTSH 8, chloroplastic (685 aa).

A chloroplast-targeting transit peptide spans 1–37 (MAASSACLLGNGLSVYTTKQRFQKLGLDRTSKVTVVK). A thylakoid-targeting transit peptide spans 38–73 (ASLDEKKHEGRRGFFKLLLGNAAAGVGLLASGNANA). Topologically, residues 38–161 (ASLDEKKHEG…HNAQEDQGSP (124 aa)) are lumenal, thylakoid. Residues 162–182 (ILNLIGNLAFPVILIGGLFLL) traverse the membrane as a helical segment. Residues 183–685 (SRRSSGGMGG…STSTPTPASV (503 aa)) are Stromal-facing. 260–267 (GPPGTGKT) is a binding site for ATP. His481 contacts Zn(2+). Glu482 is a catalytic residue. Zn(2+) contacts are provided by His485 and Asp559.

In the N-terminal section; belongs to the AAA ATPase family. This sequence in the C-terminal section; belongs to the peptidase M41 family. As to quaternary structure, heterohexamers with FTSH1, FTSH2 and FTSH5. May also form homooligomers. Zn(2+) is required as a cofactor. As to expression, expressed in cotyledons, cauline and rosette leaves, stems, sepals, flovers and siliques. Very low in roots.

The protein localises to the plastid. It is found in the chloroplast thylakoid membrane. In terms of biological role, part of a complex that function as an ATP-dependent zinc metallopeptidase. Involved in the thylakoid formation and in the removal of damaged D1 in the photosystem II, preventing cell death under high-intensity light conditions. This Arabidopsis thaliana (Mouse-ear cress) protein is ATP-dependent zinc metalloprotease FTSH 8, chloroplastic (FTSH8).